The following is a 262-amino-acid chain: Short-chain Z-isoprenyl diphosphate synthase (262 aa).

The active site involves Asp40. Asp40 provides a ligand contact to Mg(2+). Residues 41–44 (GNRR), Trp45, and 86–88 (STE) each bind substrate. The Proton acceptor role is filled by Asn89. Substrate contacts are provided by residues Arg92, Arg211, and 217-219 (RLS). Glu230 contacts Mg(2+).

It belongs to the UPP synthase family. Z-FPP synthase subfamily. Mg(2+) is required as a cofactor.

It carries out the reaction isopentenyl diphosphate + (2E)-geranyl diphosphate = (2Z,6E)-farnesyl diphosphate + diphosphate. Its pathway is phospholipid metabolism; decaprenyl phosphate biosynthesis. Generates Z-farnesyl diphosphate (Z-FPP) from isopentenyl pyrophosphate (IPP). Z-FPP is the precursor of decaprenyl diphosphate, which has a central role in the biosynthesis of the mycobacterial cell wall. This is Short-chain Z-isoprenyl diphosphate synthase from Mycobacterium leprae (strain TN).